The sequence spans 414 residues: UDP-N-acetylglucosamine 1-carboxyvinyltransferase (414 aa).

Lysine 19–asparagine 20 is a phosphoenolpyruvate binding site. UDP-N-acetyl-alpha-D-glucosamine is bound at residue arginine 89. The Proton donor role is filled by cysteine 113. A 2-(S-cysteinyl)pyruvic acid O-phosphothioketal modification is found at cysteine 113. UDP-N-acetyl-alpha-D-glucosamine contacts are provided by residues arginine 118–leucine 122, aspartate 301, and valine 323.

This sequence belongs to the EPSP synthase family. MurA subfamily.

Its subcellular location is the cytoplasm. The catalysed reaction is phosphoenolpyruvate + UDP-N-acetyl-alpha-D-glucosamine = UDP-N-acetyl-3-O-(1-carboxyvinyl)-alpha-D-glucosamine + phosphate. It participates in cell wall biogenesis; peptidoglycan biosynthesis. Cell wall formation. Adds enolpyruvyl to UDP-N-acetylglucosamine. The sequence is that of UDP-N-acetylglucosamine 1-carboxyvinyltransferase from Bdellovibrio bacteriovorus (strain ATCC 15356 / DSM 50701 / NCIMB 9529 / HD100).